The chain runs to 650 residues: Acetyl-coenzyme A synthetase (650 aa).

CoA is bound by residues 191 to 194, T311, and N335; that span reads RGGR. Residues 387–389, 411–416, D500, and R515 contribute to the ATP site; these read GEP and DTWWQT. S523 contacts CoA. R526 contributes to the ATP binding site. Mg(2+)-binding residues include V537, H539, and V542. R584 provides a ligand contact to CoA. K609 carries the post-translational modification N6-acetyllysine.

It belongs to the ATP-dependent AMP-binding enzyme family. The cofactor is Mg(2+). Post-translationally, acetylated. Deacetylation by the SIR2-homolog deacetylase activates the enzyme.

The enzyme catalyses acetate + ATP + CoA = acetyl-CoA + AMP + diphosphate. In terms of biological role, catalyzes the conversion of acetate into acetyl-CoA (AcCoA), an essential intermediate at the junction of anabolic and catabolic pathways. AcsA undergoes a two-step reaction. In the first half reaction, AcsA combines acetate with ATP to form acetyl-adenylate (AcAMP) intermediate. In the second half reaction, it can then transfer the acetyl group from AcAMP to the sulfhydryl group of CoA, forming the product AcCoA. The sequence is that of Acetyl-coenzyme A synthetase from Shewanella sp. (strain W3-18-1).